The chain runs to 218 residues: Large ribosomal subunit protein bL25 (218 aa).

A disordered region spans residues 178–218 (VTPPTVTEDPDATEEDNTTAESVEATGERNDDNLDRPGRVE). Acidic residues predominate over residues 185 to 195 (EDPDATEEDNT). The span at 203–218 (TGERNDDNLDRPGRVE) shows a compositional bias: basic and acidic residues.

The protein belongs to the bacterial ribosomal protein bL25 family. CTC subfamily. As to quaternary structure, part of the 50S ribosomal subunit; part of the 5S rRNA/L5/L18/L25 subcomplex. Contacts the 5S rRNA. Binds to the 5S rRNA independently of L5 and L18.

In terms of biological role, this is one of the proteins that binds to the 5S RNA in the ribosome where it forms part of the central protuberance. The sequence is that of Large ribosomal subunit protein bL25 from Shouchella clausii (strain KSM-K16) (Alkalihalobacillus clausii).